The sequence spans 680 residues: MIDRYKHQQLRIGSVSPQQIRAWANKILPNGEIIGEVTKPYTFHYKTNKPEKDGLFCERIFGPIKSGICACGNYRIIGDEKEDPQFCEQCGVEFVDSRIRRYQMGYIKLGCPVTHVWYLKRLPSYIANLLDKPLKELEGLVYCDFSFARPIAKKPTFLRLRGSFEYEIQSWKYSIPLFFTTQGFDKFRNREISTGAVAIREQLADLDLRIILDNSLLEWKELGEEGPAGNDWEDRKIGRRRDFLVRRMELAKHFLRTNIEPEWMVLCLLPVLPPELRPIIQIDGGKLMSSDINELYRRVIYRNNTLIDLLTTSRSTPGELVMCQEKLVQEAVDTLLDNGIRGQPMRDGHNKIYKSFSDVIEGKEGRFRETLLGKRVDYSGRSVIVVGPSLSLHQCGLPREIAIELFQTFVICGLIRQHLASNIGVAKSKIREKGPIIWEILQEVMQGHPVLLNRAPTLHRLGVQAFQPILVEGRAICLHPLVCKGFNADFDGDQMAVHVPLSLEAQAEARLLMFSHMNLLSPTIGDPISIPTQDMLIGLYVLTSGNRRGICANRYNTWNRRNYPDERIDDNSYTYTKEPLFCNSYDAIGAYRQKRINLDSPLWLRWRLDQRLIASREAPIEVHYESLGTSHEIYGHYLIVRSVKKEILSIYIRTTVGHISLYREIEEAIQGFCRACSYGT.

4 residues coordinate Zn(2+): Cys69, Cys71, Cys87, and Cys90. The Mg(2+) site is built by Asp489, Asp491, and Asp493.

The protein belongs to the RNA polymerase beta' chain family. RpoC1 subfamily. As to quaternary structure, in plastids the minimal PEP RNA polymerase catalytic core is composed of four subunits: alpha, beta, beta', and beta''. When a (nuclear-encoded) sigma factor is associated with the core the holoenzyme is formed, which can initiate transcription. Mg(2+) serves as cofactor. It depends on Zn(2+) as a cofactor.

It localises to the plastid. It is found in the chloroplast. It carries out the reaction RNA(n) + a ribonucleoside 5'-triphosphate = RNA(n+1) + diphosphate. Functionally, DNA-dependent RNA polymerase catalyzes the transcription of DNA into RNA using the four ribonucleoside triphosphates as substrates. The chain is DNA-directed RNA polymerase subunit beta' from Citrus sinensis (Sweet orange).